Reading from the N-terminus, the 594-residue chain is Insulin-like growth factor 2 mRNA-binding protein 3-A (594 aa).

RRM domains lie at 2–75 (NKLY…HSVP) and 81–156 (RKLQ…YIPD). Over residues 161-177 (PQAPSQQLQQQPQQQHP) the composition is skewed to low complexity. Residues 161 to 206 (PQAPSQQLQQQPQQQHPQGRRGFGQRGPARQGSPGAAARPKPQTEV) are disordered. KH domains follow at residues 205–270 (EVPL…CKII) and 286–353 (EIPL…EEEI). Positions 392–415 (GMPPPSVGVPSPTSSTSYPPFGQQ) are disordered. Over residues 399–411 (GVPSPTSSTSYPP) the composition is skewed to low complexity. KH domains lie at 418-483 (SETV…QGRI) and 500-566 (KLET…QRKI).

It belongs to the RRM IMP/VICKZ family. Homodimer and multimer. Associates with microtubules. Interaction with a translocation machinery protein TRAPA of the endoplasmic reticulum. Component of a mRNP complex, at least composed of DAZAP1, IGF2BP3, STAU and VgRBP60. The mRNP complex with DAZAP1, IGF2BP3, STAU and VgRBP60 is only found in the cytoplasm. Interacts with a hnRNP 1 related RNA transport protein VgRBP60 both in the nucleus (in a RNA-independent manner) and the cytoplasm (in a RNA-dependent manner). Found in a B3 activator complex.

Its subcellular location is the nucleus. The protein localises to the cytoplasm. It localises to the endoplasmic reticulum. In terms of biological role, RNA-binding protein that acts as a regulator of mRNA transport and localization. Binds to the RNA sequence motif 5'-UUCAC-3'. Preferentially binds to N6-methyladenosine (m6A)-containing mRNAs and increases their stability. Mediates the specific association of Vg1 RNA to microtubules. Binds specifically to the vegetal localization elements (VLE or VgLE) in the 3'-UTR of Vg1 and VegT mRNAs. Binds to the Vg1 and VegT mRNAs in both the nucleus and the cytoplasm. May regulate mRNA translation. Acts as a transcription regulator. Binds to the 5'-[TA]GGTTACT-3' motif within element 3 of the TFIIIA gene promoter. The sequence is that of Insulin-like growth factor 2 mRNA-binding protein 3-A (igf2bp3-a) from Xenopus laevis (African clawed frog).